Reading from the N-terminus, the 360-residue chain is Putative F-box protein At3g16210 (360 aa).

Residues 1 to 48 form the F-box domain; it reads MSKFLPEELAIEILVRLSMKDLARFRCVCKTWRDLINDPGFTETYRDM.

This Arabidopsis thaliana (Mouse-ear cress) protein is Putative F-box protein At3g16210.